Reading from the N-terminus, the 360-residue chain is Phosphoserine aminotransferase (360 aa).

An L-glutamate-binding site is contributed by Arg-41. Pyridoxal 5'-phosphate is bound by residues Trp-101, Thr-152, Asp-172, and Gln-195. The residue at position 196 (Lys-196) is an N6-(pyridoxal phosphate)lysine. 237–238 serves as a coordination point for pyridoxal 5'-phosphate; sequence NT.

Belongs to the class-V pyridoxal-phosphate-dependent aminotransferase family. SerC subfamily. As to quaternary structure, homodimer. Pyridoxal 5'-phosphate serves as cofactor.

The protein localises to the cytoplasm. It catalyses the reaction O-phospho-L-serine + 2-oxoglutarate = 3-phosphooxypyruvate + L-glutamate. It carries out the reaction 4-(phosphooxy)-L-threonine + 2-oxoglutarate = (R)-3-hydroxy-2-oxo-4-phosphooxybutanoate + L-glutamate. It functions in the pathway amino-acid biosynthesis; L-serine biosynthesis; L-serine from 3-phospho-D-glycerate: step 2/3. The protein operates within cofactor biosynthesis; pyridoxine 5'-phosphate biosynthesis; pyridoxine 5'-phosphate from D-erythrose 4-phosphate: step 3/5. Catalyzes the reversible conversion of 3-phosphohydroxypyruvate to phosphoserine and of 3-hydroxy-2-oxo-4-phosphonooxybutanoate to phosphohydroxythreonine. The polypeptide is Phosphoserine aminotransferase (Burkholderia ambifaria (strain ATCC BAA-244 / DSM 16087 / CCUG 44356 / LMG 19182 / AMMD) (Burkholderia cepacia (strain AMMD))).